Reading from the N-terminus, the 479-residue chain is Catalase easC (479 aa).

Polar residues predominate over residues 1-13 (MASQVSLTAQGSG). Residues 1-28 (MASQVSLTAQGSGLSAPLNGPEHLTSTT) form a disordered region. The active site involves His-53. A heme-binding site is contributed by Tyr-343. Positions 365 to 385 (HAANDAPKTKKPAVPLQKQSR) are disordered.

Belongs to the catalase family. Requires heme as cofactor.

The protein operates within alkaloid biosynthesis; ergot alkaloid biosynthesis. Its function is as follows. Catalase; part of the gene cluster that mediates the biosynthesis of fungal ergot alkaloid. DmaW catalyzes the first step of ergot alkaloid biosynthesis by condensing dimethylallyl diphosphate (DMAP) and tryptophan to form 4-dimethylallyl-L-tryptophan. The second step is catalyzed by the methyltransferase easF that methylates 4-dimethylallyl-L-tryptophan in the presence of S-adenosyl-L-methionine, resulting in the formation of 4-dimethylallyl-L-abrine. The catalase easC and the FAD-dependent oxidoreductase easE then transform 4-dimethylallyl-L-abrine to chanoclavine-I which is further oxidized by easD in the presence of NAD(+), resulting in the formation of chanoclavine-I aldehyde. Agroclavine dehydrogenase easG then mediates the conversion of chanoclavine-I aldehyde to agroclavine via a non-enzymatic adduct reaction: the substrate is an iminium intermediate that is formed spontaneously from chanoclavine-I aldehyde in the presence of glutathione. Further conversion of agroclavine to paspalic acid is a two-step process involving oxidation of agroclavine to elymoclavine and of elymoclavine to paspalic acid, the second step being performed by the elymoclavine oxidase cloA. However, cloA does not encode a functional enzyme indicating that C.fusiformis terminates its ergot alkaloid pathway at elymoclavine. The polypeptide is Catalase easC (Claviceps fusiformis (Ergot fungus)).